A 116-amino-acid chain; its full sequence is Protein TRACHEARY ELEMENT DIFFERENTIATION-RELATED 6 (116 aa).

The Extracellular portion of the chain corresponds to 1–24; the sequence is MASTDSVYRPTPTPDHDTTVVVVV. A helical transmembrane segment spans residues 25-45; it reads FVSLGCVMFLAFLAFVIWFLI. Topologically, residues 46-116 are cytoplasmic; that stretch reads KKRSRKHRER…GVGSSVVSRS (71 aa).

Interacts with CESA7/IRX3, a subunit of the secondary cell wall (SCW)-related cellulose synthase complex. In terms of tissue distribution, expressed preferentially in differentiating vessel elements in seedlings.

The protein resides in the cell membrane. It localises to the secreted. It is found in the cell wall. Functionally, involved in the secondary cell wall (SCW) formation of vessel elements (e.g. protoxylem and metaxylem), thus promoting tracheary element (TE) differentiation. In Arabidopsis thaliana (Mouse-ear cress), this protein is Protein TRACHEARY ELEMENT DIFFERENTIATION-RELATED 6.